A 698-amino-acid chain; its full sequence is Epithelial sodium channel subunit alpha (698 aa).

The tract at residues 1–70 is disordered; the sequence is MLDHTRAPEL…SAPRQPTEEE (70 aa). Topologically, residues 1-110 are cytoplasmic; it reads MLDHTRAPEL…CSKHNRMKTA (110 aa). Residues 111–131 traverse the membrane as a helical segment; sequence FWAVLWLCTFGMMYWQFALLF. The Extracellular portion of the chain corresponds to 132–589; that stretch reads EEYLSYPVSL…SQWSLWFGSS (458 aa). 3 cysteine pairs are disulfide-bonded: Cys158-Cys332, Cys256-Cys263, and Cys309-Cys316. Asn190 carries N-linked (GlcNAc...) asparagine glycosylation. Positions 200–270 are gating release of inhibition by proteolysis (GRIP); protease-sensitive region that is responsible for the proteolytic activation of the channel; it reads RRRSSRDLLG…SDCFYQTYSS (71 aa). Residues 213-243 are disordered; it reads HPLQRLRTPPPPYSGRTARSGSSSVRDNNPQ. Positions 229 to 243 are enriched in polar residues; the sequence is TARSGSSSVRDNNPQ. N-linked (GlcNAc...) asparagine glycosylation is present at Asn259. N-linked (GlcNAc...) asparagine glycosylation is found at Asn320, Asn339, and Asn424. 7 cysteine pairs are disulfide-bonded: Cys421/Cys506, Cys443/Cys483, Cys443/Cys502, Cys447/Cys498, Cys456/Cys483, Cys456/Cys506, and Cys458/Cys472. Asn538 carries an N-linked (GlcNAc...) asparagine glycan. A helical transmembrane segment spans residues 590 to 610; the sequence is VLSVVEMAELIFDLLVITLLM. Over 611 to 698 the chain is Cytoplasmic; sequence LLRRFRSRYW…DCSACALAAL (88 aa). The interval 637–663 is disordered; the sequence is ASSFPSRFCPHPTSPPPSLPQQGMTPP. A PY motif; recruits WW domain-containing proteins and is thereby required for ubiquitination and inhibition of the channel by NEDD4 and NEDD4L motif is present at residues 669 to 673; the sequence is PPPAY.

Belongs to the amiloride-sensitive sodium channel (TC 1.A.6) family. SCNN1A subfamily. As to quaternary structure, heterotrimer; containing an alpha/SCNN1A, a beta/SCNN1B and a gamma/SCNN1G subunit. Interacts with WWP1 (via WW domains). Interacts with WWP2 (via WW domains); inhibits the channel. Interacts with BPIFA1; the interaction is indirect via SCNN1B and inhibits the proteolytic processing of SCNN1A and SCNN1G and the activation of ENaC. Interacts with the full-length immature form of PCSK9 (pro-PCSK9). Ubiquitinated. Can be ubiquitinated at multiple sites and undergo monoubiquitination and polyubiquitination. Ubiquitination by NEDD4 or NEDD4L inhibits the ENaC channel through endocytosis, intracellular retention and degradation of its individual subunits. Post-translationally, N-glycosylated. In terms of processing, ENaC is activated through the proteolytic maturation of its subunits. Furin cleaves the SCNN1A subunit, which results in a stepwise increase in the open probability of the channel due to the release of an inhibitory tract. BPIFA1, which is recruited by the SCNN1B subunit, prevents the proteolytic activation of ENaC. Detected in kidney, lung and testis (at protein level). In the testis, detected within the seminiferous tubules but not in the interstitial cells (at protein level).

It localises to the apical cell membrane. The protein localises to the cell projection. It is found in the cilium. Its subcellular location is the cytoplasmic granule. The protein resides in the cytoplasm. It localises to the cytoplasmic vesicle. The protein localises to the secretory vesicle. It is found in the acrosome. Its subcellular location is the flagellum. It catalyses the reaction Na(+)(in) = Na(+)(out). With respect to regulation, originally identified and characterized by its inhibition by the diuretic drug amiloride. Functionally, this is one of the three pore-forming subunits of the heterotrimeric epithelial sodium channel (ENaC), a critical regulator of sodium balance and fluid homeostasis. ENaC operates in epithelial tissues, where it mediates the electrodiffusion of sodium ions from extracellular fluid through the apical membrane of cells, with water following osmotically. It plays a key role in maintaining sodium homeostasis through electrogenic sodium reabsorption in the kidneys. Additionally, ENaC is essential for airway surface liquid homeostasis, which is crucial for proper mucus clearance. In Rattus norvegicus (Rat), this protein is Epithelial sodium channel subunit alpha.